The chain runs to 356 residues: Nuclear hormone receptor family member nhr-169 (356 aa).

The segment at residues D16–E90 is a DNA-binding region (nuclear receptor). 2 NR C4-type zinc fingers span residues C19–C40 and C56–C72. The 213-residue stretch at D144–F356 folds into the NR LBD domain.

It belongs to the nuclear hormone receptor family.

It is found in the nucleus. In terms of biological role, orphan nuclear receptor. The protein is Nuclear hormone receptor family member nhr-169 (nhr-169) of Caenorhabditis elegans.